We begin with the raw amino-acid sequence, 20 residues long: Succinate--CoA ligase [ADP-forming] subunit beta, mitochondrial (20 aa).

One can recognise an ATP-grasp domain in the interval 8-20 (SMELLQEAGVSIP).

It belongs to the succinate/malate CoA ligase beta subunit family. ATP-specific subunit beta subfamily. As to quaternary structure, heterodimer of an alpha and a beta subunit. The beta subunit determines specificity for ATP. Interacts with ALAS2.

Its subcellular location is the mitochondrion. The enzyme catalyses succinate + ATP + CoA = succinyl-CoA + ADP + phosphate. The protein operates within carbohydrate metabolism; tricarboxylic acid cycle; succinate from succinyl-CoA (ligase route): step 1/1. ATP-specific succinyl-CoA synthetase functions in the citric acid cycle (TCA), coupling the hydrolysis of succinyl-CoA to the synthesis of ATP and thus represents the only step of substrate-level phosphorylation in the TCA. The beta subunit provides nucleotide specificity of the enzyme and binds the substrate succinate, while the binding sites for coenzyme A and phosphate are found in the alpha subunit. The chain is Succinate--CoA ligase [ADP-forming] subunit beta, mitochondrial from Canis lupus familiaris (Dog).